A 214-amino-acid polypeptide reads, in one-letter code: Probable nicotinate-nucleotide adenylyltransferase (214 aa).

This sequence belongs to the NadD family.

The enzyme catalyses nicotinate beta-D-ribonucleotide + ATP + H(+) = deamido-NAD(+) + diphosphate. The protein operates within cofactor biosynthesis; NAD(+) biosynthesis; deamido-NAD(+) from nicotinate D-ribonucleotide: step 1/1. Catalyzes the reversible adenylation of nicotinate mononucleotide (NaMN) to nicotinic acid adenine dinucleotide (NaAD). The protein is Probable nicotinate-nucleotide adenylyltransferase of Rhodopirellula baltica (strain DSM 10527 / NCIMB 13988 / SH1).